The primary structure comprises 414 residues: Secreted beta-glucosidase sun1 (414 aa).

Positions 1-19 are cleaved as a signal peptide; it reads MKFNTVALTLATAGSLVTA. Residue N80 is glycosylated (N-linked (GlcNAc...) asparagine). Low complexity predominate over residues 115-140; that stretch reads TSASSSETVQTPAASSSSASSSSTAT. A disordered region spans residues 115–141; sequence TSASSSETVQTPAASSSSASSSSTATG. N-linked (GlcNAc...) asparagine glycosylation is present at N377.

Belongs to the SUN family. Highly glycosylated.

The protein localises to the secreted. Its subcellular location is the cell wall. Functionally, cell surface beta-glucosidase involved in cell wall biosynthesis and septation, and thus required for normal growth and correct hyphal morphogenesis. Has hydrolytic activity on linear (1-&gt;3)-beta-D-glucans such as laminaribiose and other laminarioligosaccharides. Also has a minor transferase activity. The protein is Secreted beta-glucosidase sun1 (sun1) of Aspergillus fumigatus (strain ATCC MYA-4609 / CBS 101355 / FGSC A1100 / Af293) (Neosartorya fumigata).